Reading from the N-terminus, the 193-residue chain is Large ribosomal subunit protein uL18 (193 aa).

Belongs to the universal ribosomal protein uL18 family. In terms of assembly, part of the 50S ribosomal subunit. Contacts the 5S and 23S rRNAs.

Functionally, this is one of the proteins that bind and probably mediate the attachment of the 5S RNA into the large ribosomal subunit, where it forms part of the central protuberance. This chain is Large ribosomal subunit protein uL18, found in Methanococcus maripaludis (strain C5 / ATCC BAA-1333).